The chain runs to 300 residues: Epimerase family protein SAR0825 (300 aa).

It belongs to the NAD(P)-dependent epimerase/dehydratase family. SDR39U1 subfamily.

The protein is Epimerase family protein SAR0825 of Staphylococcus aureus (strain MRSA252).